The chain runs to 70 residues: Putative peptide YY-3 (70 aa).

An N-terminal signal peptide occupies residues 1–23; it reads MVSVCRPWPAVAIALLALLVCLG.

Belongs to the NPY family.

The protein localises to the secreted. The protein is Putative peptide YY-3 (PYY3) of Homo sapiens (Human).